The following is a 90-amino-acid chain: Small ribosomal subunit protein uS15c (90 aa).

The protein belongs to the universal ribosomal protein uS15 family. In terms of assembly, part of the 30S ribosomal subunit.

The protein resides in the plastid. It is found in the chloroplast. This Buxus microphylla (Littleleaf boxwood) protein is Small ribosomal subunit protein uS15c (rps15).